A 669-amino-acid chain; its full sequence is Putative heme-binding protein rrnAC3100 (669 aa).

Residue H181 participates in heme binding. 2 disordered regions span residues 260–351 (RVPT…PDVS) and 451–477 (LGGS…ESSQ). Residues 579–667 (GTMGMFYTVK…VLADRPRHVF (89 aa)) form the ABM domain.

The protein in the N-terminal section; belongs to the ChdC family.

This Haloarcula marismortui (strain ATCC 43049 / DSM 3752 / JCM 8966 / VKM B-1809) (Halobacterium marismortui) protein is Putative heme-binding protein rrnAC3100.